The chain runs to 410 residues: Arginine biosynthesis bifunctional protein ArgJ (410 aa).

Positions 160, 186, 197, 283, 405, and 410 each coordinate substrate. Thr197 (nucleophile) is an active-site residue.

Belongs to the ArgJ family. Heterotetramer of two alpha and two beta chains.

The protein localises to the cytoplasm. The enzyme catalyses N(2)-acetyl-L-ornithine + L-glutamate = N-acetyl-L-glutamate + L-ornithine. It carries out the reaction L-glutamate + acetyl-CoA = N-acetyl-L-glutamate + CoA + H(+). It participates in amino-acid biosynthesis; L-arginine biosynthesis; L-ornithine and N-acetyl-L-glutamate from L-glutamate and N(2)-acetyl-L-ornithine (cyclic): step 1/1. Its pathway is amino-acid biosynthesis; L-arginine biosynthesis; N(2)-acetyl-L-ornithine from L-glutamate: step 1/4. Catalyzes two activities which are involved in the cyclic version of arginine biosynthesis: the synthesis of N-acetylglutamate from glutamate and acetyl-CoA as the acetyl donor, and of ornithine by transacetylation between N(2)-acetylornithine and glutamate. The sequence is that of Arginine biosynthesis bifunctional protein ArgJ from Geobacillus kaustophilus (strain HTA426).